We begin with the raw amino-acid sequence, 450 residues long: Casein kinase 1-like protein 1 (450 aa).

In terms of domain architecture, Protein kinase spans 9 to 278; that stretch reads FRLGRKIGSG…LKRIFRDLFI (270 aa). ATP is bound by residues 15 to 23 and K38; that span reads IGSGSFGEI. The active-site Proton acceptor is the D128. The tract at residues 311 to 450 is disordered; the sequence is AVGTSAALPP…LQVSDEHHPH (140 aa). Positions 328 to 342 are enriched in basic and acidic residues; the sequence is YTGEEEGRPHMESSR. Residues 349-365 show a composition bias toward polar residues; it reads LDNSGNISNQPTSSSAR. The span at 371-382 shows a compositional bias: low complexity; sequence SSSLFAQSAGSS.

Belongs to the protein kinase superfamily. CK1 Ser/Thr protein kinase family. Casein kinase I subfamily. As to quaternary structure, monomer. Autophosphorylated. As to expression, expressed in flowers.

It localises to the cytoplasm. The protein resides in the cell junction. Its subcellular location is the plasmodesma. The enzyme catalyses L-seryl-[protein] + ATP = O-phospho-L-seryl-[protein] + ADP + H(+). The catalysed reaction is L-threonyl-[protein] + ATP = O-phospho-L-threonyl-[protein] + ADP + H(+). Its function is as follows. Casein kinases are operationally defined by their preferential utilization of acidic proteins such as caseins as substrates. It can phosphorylate a large number of proteins. This Arabidopsis thaliana (Mouse-ear cress) protein is Casein kinase 1-like protein 1.